Reading from the N-terminus, the 150-residue chain is Nucleoside diphosphate kinase (150 aa).

The ATP site is built by lysine 9, phenylalanine 57, arginine 85, threonine 91, arginine 102, and asparagine 112. The active-site Pros-phosphohistidine intermediate is histidine 115.

This sequence belongs to the NDK family. The cofactor is Mg(2+).

The protein resides in the cytoplasm. The enzyme catalyses a 2'-deoxyribonucleoside 5'-diphosphate + ATP = a 2'-deoxyribonucleoside 5'-triphosphate + ADP. The catalysed reaction is a ribonucleoside 5'-diphosphate + ATP = a ribonucleoside 5'-triphosphate + ADP. Its function is as follows. Major role in the synthesis of nucleoside triphosphates other than ATP. The ATP gamma phosphate is transferred to the NDP beta phosphate via a ping-pong mechanism, using a phosphorylated active-site intermediate. The chain is Nucleoside diphosphate kinase from Methanoregula boonei (strain DSM 21154 / JCM 14090 / 6A8).